The chain runs to 31 residues: MLTIISYFGLLLATLTFTIVLFVGLSKIQLI.

A helical membrane pass occupies residues 4–24 (IISYFGLLLATLTFTIVLFVG).

It belongs to the PetL family. In terms of assembly, the 4 large subunits of the cytochrome b6-f complex are cytochrome b6, subunit IV (17 kDa polypeptide, PetD), cytochrome f and the Rieske protein, while the 4 small subunits are PetG, PetL, PetM and PetN. The complex functions as a dimer.

The protein localises to the plastid. The protein resides in the chloroplast thylakoid membrane. Its function is as follows. Component of the cytochrome b6-f complex, which mediates electron transfer between photosystem II (PSII) and photosystem I (PSI), cyclic electron flow around PSI, and state transitions. PetL is important for photoautotrophic growth as well as for electron transfer efficiency and stability of the cytochrome b6-f complex. The polypeptide is Cytochrome b6-f complex subunit 6 (Staurastrum punctulatum (Green alga)).